An 865-amino-acid chain; its full sequence is Protein translocase subunit SecA (865 aa).

Residues Q93, 111-115, and D501 each bind ATP; that span reads GEGKT. Zn(2+) is bound by residues C841, C843, C852, and C853.

This sequence belongs to the SecA family. Monomer and homodimer. Part of the essential Sec protein translocation apparatus which comprises SecA, SecYEG and auxiliary proteins SecDF-YajC and YidC. Zn(2+) is required as a cofactor.

It localises to the cell inner membrane. It is found in the cytoplasm. It carries out the reaction ATP + H2O + cellular proteinSide 1 = ADP + phosphate + cellular proteinSide 2.. Part of the Sec protein translocase complex. Interacts with the SecYEG preprotein conducting channel. Has a central role in coupling the hydrolysis of ATP to the transfer of proteins into and across the cell membrane, serving as an ATP-driven molecular motor driving the stepwise translocation of polypeptide chains across the membrane. The polypeptide is Protein translocase subunit SecA (Helicobacter pylori (strain ATCC 700392 / 26695) (Campylobacter pylori)).